We begin with the raw amino-acid sequence, 211 residues long: Thiamine-phosphate synthase (211 aa).

Residues 37–41 (QLRIK) and Asn-69 each bind 4-amino-2-methyl-5-(diphosphooxymethyl)pyrimidine. 2 residues coordinate Mg(2+): Asp-70 and Asp-89. Ser-108 provides a ligand contact to 4-amino-2-methyl-5-(diphosphooxymethyl)pyrimidine. 134–136 (TQT) is a binding site for 2-[(2R,5Z)-2-carboxy-4-methylthiazol-5(2H)-ylidene]ethyl phosphate. Lys-137 contacts 4-amino-2-methyl-5-(diphosphooxymethyl)pyrimidine. 2-[(2R,5Z)-2-carboxy-4-methylthiazol-5(2H)-ylidene]ethyl phosphate contacts are provided by residues Gly-166 and 186 to 187 (VS).

The protein belongs to the thiamine-phosphate synthase family. Mg(2+) serves as cofactor.

It carries out the reaction 2-[(2R,5Z)-2-carboxy-4-methylthiazol-5(2H)-ylidene]ethyl phosphate + 4-amino-2-methyl-5-(diphosphooxymethyl)pyrimidine + 2 H(+) = thiamine phosphate + CO2 + diphosphate. The catalysed reaction is 2-(2-carboxy-4-methylthiazol-5-yl)ethyl phosphate + 4-amino-2-methyl-5-(diphosphooxymethyl)pyrimidine + 2 H(+) = thiamine phosphate + CO2 + diphosphate. It catalyses the reaction 4-methyl-5-(2-phosphooxyethyl)-thiazole + 4-amino-2-methyl-5-(diphosphooxymethyl)pyrimidine + H(+) = thiamine phosphate + diphosphate. The protein operates within cofactor biosynthesis; thiamine diphosphate biosynthesis; thiamine phosphate from 4-amino-2-methyl-5-diphosphomethylpyrimidine and 4-methyl-5-(2-phosphoethyl)-thiazole: step 1/1. Functionally, condenses 4-methyl-5-(beta-hydroxyethyl)thiazole monophosphate (THZ-P) and 2-methyl-4-amino-5-hydroxymethyl pyrimidine pyrophosphate (HMP-PP) to form thiamine monophosphate (TMP). The polypeptide is Thiamine-phosphate synthase (Salmonella paratyphi B (strain ATCC BAA-1250 / SPB7)).